The following is a 316-amino-acid chain: DnaJ homolog subfamily B member 13 (316 aa).

The J domain maps to 4–68 (DYYSVLGITR…MKRGIYDKFG (65 aa)).

As to quaternary structure, homodimer. Component of the axonemal radial spoke complex 1 (RS1), at least composed of spoke head proteins RSPH1, RSPH3, RSPH9 and the cilia-specific component RSPH4A or sperm-specific component RSPH6A, spoke stalk proteins RSPH14, DNAJB13, DYDC1, ROPN1L and NME5, and the anchor protein IQUB. Interacts with SUN5. Interacts with IQUB. Specifically expressed in testis and trachea.

It localises to the cell projection. It is found in the cilium. The protein resides in the flagellum. In terms of biological role, functions as part of axonemal radial spoke complexes that play an important part in the motility of sperm and cilia. This chain is DnaJ homolog subfamily B member 13 (DNAJB13), found in Homo sapiens (Human).